The following is an 89-amino-acid chain: FMRFamide-like neuropeptides 19 (89 aa).

An N-terminal signal peptide occupies residues 1 to 20 (MSFQLTLFSMLFLLIAVVVG). The propeptide occupies 21-67 (QPIQSQNGDLKMQAVQDNSPLNMEAFNDDSALYDYLEQSDPSLKSME). F76 is modified (phenylalanine amide). A propeptide spanning residues 80 to 89 (ASWASSVRFG) is cleaved from the precursor.

The protein belongs to the FARP (FMRFamide related peptide) family. In terms of tissue distribution, each flp gene is expressed in a distinct set of neurons. Flp-19 is expressed in the URX interneurons, the serotonin and acetylcholine-expressing HSN neurons, and the AIN, AWA and BAG neurons.

The protein localises to the secreted. In terms of biological role, FMRFamides and FMRFamide-like peptides are neuropeptides. WANQVRF-amide inhibits the activity of dissected pharyngeal myogenic muscle system. The protein is FMRFamide-like neuropeptides 19 of Caenorhabditis elegans.